The following is a 424-amino-acid chain: Adenylosuccinate synthetase (424 aa).

Residues 12 to 18 and 40 to 42 contribute to the GTP site; these read GDEGKGK and GHT. The Proton acceptor role is filled by Asp13. The Mg(2+) site is built by Asp13 and Gly40. Residues 13 to 16, 38 to 41, Thr130, Arg144, Asn220, Thr235, and Arg299 each bind IMP; these read DEGK and NAGH. The active-site Proton donor is the His41. Position 295 to 301 (295 to 301) interacts with substrate; the sequence is VTTGRRR. Residues Arg301, 327 to 329, and 412 to 414 each bind GTP; these read KLD and GTG.

Belongs to the adenylosuccinate synthetase family. Homodimer. Mg(2+) is required as a cofactor.

It localises to the cytoplasm. It catalyses the reaction IMP + L-aspartate + GTP = N(6)-(1,2-dicarboxyethyl)-AMP + GDP + phosphate + 2 H(+). Its pathway is purine metabolism; AMP biosynthesis via de novo pathway; AMP from IMP: step 1/2. In terms of biological role, plays an important role in the de novo pathway and in the salvage pathway of purine nucleotide biosynthesis. Catalyzes the first committed step in the biosynthesis of AMP from IMP. The chain is Adenylosuccinate synthetase from Aspergillus fumigatus (strain CBS 144.89 / FGSC A1163 / CEA10) (Neosartorya fumigata).